The chain runs to 335 residues: Foldase protein PrsA (335 aa).

The signal sequence occupies residues 1–22; the sequence is MRSAKKLLSVLCLGVFILTFTA. Cys23 is lipidated: N-palmitoyl cysteine. Cys23 is lipidated: S-diacylglycerol cysteine. In terms of domain architecture, PpiC spans 194–285; it reads PNTMNVSHIL…FGYHIIKINS (92 aa).

Belongs to the PrsA family.

It localises to the cell membrane. It carries out the reaction [protein]-peptidylproline (omega=180) = [protein]-peptidylproline (omega=0). Plays a major role in protein secretion by helping the post-translocational extracellular folding of several secreted proteins. This chain is Foldase protein PrsA, found in Clostridium botulinum (strain Loch Maree / Type A3).